Consider the following 460-residue polypeptide: tRNA modification GTPase MnmE (460 aa).

Residues R29, E91, and R131 each coordinate (6S)-5-formyl-5,6,7,8-tetrahydrofolate. The TrmE-type G domain maps to G226–G383. N236 is a binding site for K(+). Residues N236–S241, T255–T261, and D280–G283 each bind GTP. S240 contacts Mg(2+). Positions 255, 257, and 260 each coordinate K(+). Residue T261 coordinates Mg(2+). (6S)-5-formyl-5,6,7,8-tetrahydrofolate is bound at residue K460.

This sequence belongs to the TRAFAC class TrmE-Era-EngA-EngB-Septin-like GTPase superfamily. TrmE GTPase family. Homodimer. Heterotetramer of two MnmE and two MnmG subunits. K(+) serves as cofactor.

It localises to the cytoplasm. Exhibits a very high intrinsic GTPase hydrolysis rate. Involved in the addition of a carboxymethylaminomethyl (cmnm) group at the wobble position (U34) of certain tRNAs, forming tRNA-cmnm(5)s(2)U34. The protein is tRNA modification GTPase MnmE of Synechococcus sp. (strain WH7803).